A 218-amino-acid polypeptide reads, in one-letter code: Cytochrome c biogenesis ATP-binding export protein CcmA (218 aa).

In terms of domain architecture, ABC transporter spans 12–217 (LHAEQLSSIR…KLSLEYRGEV (206 aa)). 44-51 (GPNGAGKS) contacts ATP.

The protein belongs to the ABC transporter superfamily. CcmA exporter (TC 3.A.1.107) family. The complex is composed of two ATP-binding proteins (CcmA) and two transmembrane proteins (CcmB).

The protein localises to the cell inner membrane. It carries out the reaction heme b(in) + ATP + H2O = heme b(out) + ADP + phosphate + H(+). Part of the ABC transporter complex CcmAB involved in the biogenesis of c-type cytochromes; once thought to export heme, this seems not to be the case, but its exact role is uncertain. Responsible for energy coupling to the transport system. This chain is Cytochrome c biogenesis ATP-binding export protein CcmA, found in Idiomarina loihiensis (strain ATCC BAA-735 / DSM 15497 / L2-TR).